A 144-amino-acid chain; its full sequence is Putative pre-16S rRNA nuclease (144 aa).

The protein belongs to the YqgF nuclease family.

It localises to the cytoplasm. Its function is as follows. Could be a nuclease involved in processing of the 5'-end of pre-16S rRNA. This chain is Putative pre-16S rRNA nuclease, found in Oenococcus oeni (strain ATCC BAA-331 / PSU-1).